Reading from the N-terminus, the 197-residue chain is MQLKRVAEAKLPTPWGDFLMVGFEELATGQDHVALVFGDISGTEPVLARVHSECLTGDALFSLRCDCGFQLEAALSHIAEAGRGVLLYHRQEGRNIGLLNKIRAYALQDQGYDTVEANHQLGFAADERDFTLCADMFKLLGVDEVRLLTNNPRKVEILTEAGINIVERVPLIVGRNPKNEHYLDTKAAKMGHLLSGN.

49 to 53 (RVHSE) serves as a coordination point for GTP. Residues Cys54, Cys65, and Cys67 each contribute to the Zn(2+) site. GTP is bound by residues Gln70, 92-94 (EGR), and Thr114. Residue Asp126 is the Proton acceptor of the active site. Arg128 serves as the catalytic Nucleophile. 2 residues coordinate GTP: Thr149 and Lys154.

It belongs to the GTP cyclohydrolase II family. As to quaternary structure, homodimer. Zn(2+) is required as a cofactor.

The catalysed reaction is GTP + 4 H2O = 2,5-diamino-6-hydroxy-4-(5-phosphoribosylamino)-pyrimidine + formate + 2 phosphate + 3 H(+). It participates in cofactor biosynthesis; riboflavin biosynthesis; 5-amino-6-(D-ribitylamino)uracil from GTP: step 1/4. In terms of biological role, catalyzes the conversion of GTP to 2,5-diamino-6-ribosylamino-4(3H)-pyrimidinone 5'-phosphate (DARP), formate and pyrophosphate. The chain is GTP cyclohydrolase-2 from Cronobacter sakazakii (strain ATCC BAA-894) (Enterobacter sakazakii).